The chain runs to 476 residues: Glycogen synthase (476 aa).

K15 lines the ADP-alpha-D-glucose pocket.

Belongs to the glycosyltransferase 1 family. Bacterial/plant glycogen synthase subfamily.

It carries out the reaction [(1-&gt;4)-alpha-D-glucosyl](n) + ADP-alpha-D-glucose = [(1-&gt;4)-alpha-D-glucosyl](n+1) + ADP + H(+). It participates in glycan biosynthesis; glycogen biosynthesis. In terms of biological role, synthesizes alpha-1,4-glucan chains using ADP-glucose. The chain is Glycogen synthase from Yersinia pestis bv. Antiqua (strain Antiqua).